Here is a 219-residue protein sequence, read N- to C-terminus: RNA chaperone ProQ (219 aa).

Positions 102 to 160 (TLKESQDKAKAKRAERSKDEGDAADKAPRKPKRKPQPQARRDAKPAAKDKPKAAPKAPA) are disordered. 2 stretches are compositionally biased toward basic and acidic residues: residues 105–129 (ESQDKAKAKRAERSKDEGDAADKAP) and 140–153 (ARRDAKPAAKDKPK).

This sequence belongs to the ProQ family.

The protein localises to the cytoplasm. RNA chaperone with significant RNA binding, RNA strand exchange and RNA duplexing activities. This Shewanella amazonensis (strain ATCC BAA-1098 / SB2B) protein is RNA chaperone ProQ.